The following is a 359-amino-acid chain: DNA polymerase IV (359 aa).

A UmuC domain is found at 4 to 185 (IIHVDMDCFF…LALIKIPGVG (182 aa)). Residues Asp-8 and Asp-103 each contribute to the Mg(2+) site. Glu-104 is a catalytic residue.

Belongs to the DNA polymerase type-Y family. Monomer. The cofactor is Mg(2+).

It localises to the cytoplasm. The catalysed reaction is DNA(n) + a 2'-deoxyribonucleoside 5'-triphosphate = DNA(n+1) + diphosphate. In terms of biological role, poorly processive, error-prone DNA polymerase involved in untargeted mutagenesis. Copies undamaged DNA at stalled replication forks, which arise in vivo from mismatched or misaligned primer ends. These misaligned primers can be extended by PolIV. Exhibits no 3'-5' exonuclease (proofreading) activity. May be involved in translesional synthesis, in conjunction with the beta clamp from PolIII. The sequence is that of DNA polymerase IV from Shewanella loihica (strain ATCC BAA-1088 / PV-4).